We begin with the raw amino-acid sequence, 717 residues long: Delta-like protein D (717 aa).

The N-terminal stretch at 1-19 (MGRLMIAVLLCVMISQGFC) is a signal peptide. The Extracellular segment spans residues 20–547 (SGVFELKLQE…EEDDGGFPWT (528 aa)). One can recognise a DSL domain in the interval 175–219 (FVCDEHYYGEGCSVFCRPRDDTFGHFTCGERGEIICNSGWKGQYC). Cystine bridges form between cysteine 177–cysteine 186, cysteine 190–cysteine 202, cysteine 210–cysteine 219, cysteine 224–cysteine 235, cysteine 228–cysteine 241, cysteine 243–cysteine 252, cysteine 261–cysteine 266, cysteine 274–cysteine 283, cysteine 290–cysteine 302, cysteine 296–cysteine 312, cysteine 314–cysteine 323, cysteine 330–cysteine 341, cysteine 335–cysteine 350, cysteine 352–cysteine 361, cysteine 368–cysteine 379, cysteine 373–cysteine 389, cysteine 391–cysteine 400, cysteine 407–cysteine 418, cysteine 412–cysteine 427, cysteine 429–cysteine 438, cysteine 445–cysteine 456, cysteine 450–cysteine 465, cysteine 467–cysteine 476, cysteine 483–cysteine 494, cysteine 488–cysteine 503, and cysteine 505–cysteine 514. EGF-like domains follow at residues 220–253 (TEPICLPGCDEDHGFCDKPGECKCRVGFSGKYCD), 257–284 (RYPGCLHGTCQQPWQCNCQEGWGGLFCN), and 286–324 (DLNYCTHHKPCQNGATCTNTGQGSYTCSCRPGFTGDSCE). One can recognise an EGF-like 4; calcium-binding domain in the interval 326–362 (EVNECSGSPCRNGGSCTDLENTYSCTCPPGFYGRNCE). EGF-like domains lie at 364–401 (SAMTCADGPCFNGGHCADNPEGGYFCQCPMGYAGFNCE) and 403–439 (KIDHCSSNPCSNDAQCLDLVDSYLCQCPEGFTGTHCE). An EGF-like 7; calcium-binding domain is found at 441–477 (NIDECATYPCQNGGTCQDGLSDYTCTCPPGYTGKNCT). N-linked (GlcNAc...) asparagine glycosylation is present at asparagine 475. Positions 479-515 (AVNKCLHNPCHNGATCHEMDNRYVCACIPGYGGRNCQ) constitute an EGF-like 8 domain. A helical membrane pass occupies residues 548 to 568 (AVCAGIILVLLVLIGGSVFVI). The Cytoplasmic segment spans residues 569–717 (YIRLKLQQRS…KDECIIATEV (149 aa)). The interval 649–693 (EDLGKEDSERSEATKCEPLDSDSEEKHRNHLKSDSSERKRTESLC) is disordered.

As to quaternary structure, interacts with mib. In terms of processing, ubiquitinated by mib, leading to its endocytosis and subsequent degradation. As to expression, expressed in both mesodermal and neuroectodermal regions. In the developing nervous system, it is expressed in overlapping regions with deltaB (dlb) and deltaA (dla); in the neural plate, dld is expressed in patches of contiguous cells with dla, while dlb is confined to scattered cells within those patches that will differentiate as neurons. In somites, it marks the anterior part of each formed somite, while deltaC (dlc) marks the posterior part. In 24 hours embryos, expressed in the hindbrain in stripes adjacent to rhombomere boundaries, but not in the actual boundary cells.

The protein localises to the membrane. Acts as a ligand for Notch receptors and is involved in primary neurogenesis and somitogenesis. Can activate Notch receptors, thereby playing a key role in lateral inhibition, a process that prevents the immediate neighbors of each nascent neural cell from simultaneously embarking on neural differentiation. Required in somite segmentation to keep the oscillations of neighboring presomitic mesoderm cells synchronized. The polypeptide is Delta-like protein D (dld) (Danio rerio (Zebrafish)).